A 24-amino-acid chain; its full sequence is Large ribosomal subunit protein uL10 (24 aa).

This sequence belongs to the universal ribosomal protein uL10 family. In terms of assembly, part of the ribosomal stalk of the 50S ribosomal subunit. The N-terminus interacts with L11 and the large rRNA to form the base of the stalk. The C-terminus forms an elongated spine to which L12 dimers bind in a sequential fashion forming a multimeric L10(L12)X complex.

In terms of biological role, forms part of the ribosomal stalk, playing a central role in the interaction of the ribosome with GTP-bound translation factors. This chain is Large ribosomal subunit protein uL10 (rplJ), found in Enterobacter cloacae.